A 202-amino-acid polypeptide reads, in one-letter code: Syndecan-4 (202 aa).

The first 23 residues, 1 to 23 (MAPVCLFAPLLLLLLGGFPVAPG), serve as a signal peptide directing secretion. Over 24–149 (ESIRETEVID…QGSNIFERTE (126 aa)) the chain is Extracellular. 2 disordered regions span residues 42–76 (YFSGALPDDEDAGGLEQDSDFELSGSGDLDDTEEP) and 89–138 (LDNH…MSST). Residue serine 44 is glycosylated (O-linked (Xyl...) (glycosaminoglycan) serine). The segment covering 48–62 (PDDEDAGGLEQDSDF) has biased composition (acidic residues). O-linked (Xyl...) (glycosaminoglycan) serine glycosylation is found at serine 65 and serine 67. Over residues 105 to 121 (SEPKELEENEVIPKRVP) the composition is skewed to basic and acidic residues. Residues 150-174 (VLAALIVGGVVGILFAVFLILLLVY) traverse the membrane as a helical segment. The Cytoplasmic portion of the chain corresponds to 175–202 (RMKKKDEGSYDLGKKPIYKKAPTNEFYA).

This sequence belongs to the syndecan proteoglycan family. In terms of assembly, homodimer. Interacts with CDCP1 and SDCBP. Interacts (via its cytoplasmic domain) with GIPC (via its PDZ domain). Interacts (via its cytoplasmic domain) with NUDT16L1. Interacts with DNM2; this interaction is markedly enhanced at focal ahesion site upon induction of focal adhesions and stress-fiber formation. In terms of processing, shedding is enhanced by a number of factors such as heparanase, thrombin or EGF. Also by stress and wound healing. PMA-mediated shedding is inhibited by TIMP3. Post-translationally, O-glycosylated; contains both chondroitin sulfate and heparan sulfate. Ser-44, Ser-65 and Ser-67 can all be modified by either chondroitin sulfate or heparan sulfate, and the protein exists in forms that contain only chondroitin sulfate, only heparan sulfate and both chondroitin sulfate and heparan sulfate.

It is found in the membrane. It localises to the secreted. In terms of biological role, cell surface proteoglycan which regulates exosome biogenesis in concert with SDCBP and PDCD6IP. The polypeptide is Syndecan-4 (Rattus norvegicus (Rat)).